A 477-amino-acid chain; its full sequence is Argininosuccinate lyase (477 aa).

Residues 1–18 show a composition bias toward polar residues; that stretch reads MTTSSHSSEQPTSTQTSG. Residues 1–21 are disordered; that stretch reads MTTSSHSSEQPTSTQTSGMWG.

The protein belongs to the lyase 1 family. Argininosuccinate lyase subfamily.

The protein localises to the cytoplasm. The enzyme catalyses 2-(N(omega)-L-arginino)succinate = fumarate + L-arginine. The protein operates within amino-acid biosynthesis; L-arginine biosynthesis; L-arginine from L-ornithine and carbamoyl phosphate: step 3/3. The sequence is that of Argininosuccinate lyase from Acinetobacter baylyi (strain ATCC 33305 / BD413 / ADP1).